The primary structure comprises 142 residues: Hemoglobin subunit zeta (142 aa).

Ser-2 carries the N-acetylserine modification. The Globin domain maps to 2 to 142; the sequence is SLTKTERTII…VSSVLTEKYR (141 aa). Phosphothreonine is present on Thr-29. At Ser-53 the chain carries Phosphoserine. A heme b-binding site is contributed by His-59. Phosphoserine occurs at positions 73 and 82. Position 88 (His-88) interacts with heme b.

This sequence belongs to the globin family. Heterotetramer of two zeta chains and two epsilon chains in early embryonic hemoglobin Gower-1; two zeta chains and two gamma chains in fetal hemoglobin Portland-1. Heterotetramer of two zeta chains and two beta chains in hemoglobin Portland-2, detected in fetuses and neonates with homozygous alpha-thalassemia. Detected in fetal erythrocytes (at protein level).

In terms of biological role, the zeta chain is an alpha-type chain of mammalian embryonic hemoglobin. This chain is Hemoglobin subunit zeta (HBZ), found in Homo sapiens (Human).